Consider the following 287-residue polypeptide: Heterodimeric geranylgeranyl pyrophosphate synthase small subunit 2, chloroplastic (287 aa).

Mg(2+) is bound by residues Glu-103 and Asp-109. Lys-204, Gln-241, and Lys-250 together coordinate dimethylallyl diphosphate.

The protein belongs to the FPP/GGPP synthase family. Part of a heterodimeric geranyl(geranyl)diphosphate synthase. It depends on Mg(2+) as a cofactor. Mainly expressed in trichomes, and, to a lower extent, in roots, leaves, flowers and stems.

It is found in the plastid. The protein localises to the chloroplast thylakoid membrane. In terms of biological role, heterodimeric geranyl(geranyl)-diphosphate (GPP) synthase small subunit. The small subunit alone is inactive in vitro while the large subunit GGPPS1 catalyzes mainly the production of geranygeranyl-diphosphate in vitro. Upon association of the two subunits, the product profile changes and the production of gerany-diphosphate is strongly increased. The chain is Heterodimeric geranylgeranyl pyrophosphate synthase small subunit 2, chloroplastic from Cannabis sativa (Hemp).